The sequence spans 365 residues: 25S rRNA (uridine(2843)-N(3))-methyltransferase (365 aa).

The protein belongs to the class I-like SAM-binding methyltransferase superfamily.

Its subcellular location is the cytoplasm. The protein resides in the nucleus. The enzyme catalyses uridine(2843) in 25S rRNA + S-adenosyl-L-methionine = N(3)-methyluridine(2843) in 25S rRNA + S-adenosyl-L-homocysteine + H(+). Functionally, S-adenosyl-L-methionine-dependent methyltransferase that specifically methylates the N(3) position of uridine 2843 (m3U2843) in 25S rRNA. The sequence is that of 25S rRNA (uridine(2843)-N(3))-methyltransferase (BMT6) from Saccharomyces cerevisiae (strain ATCC 204508 / S288c) (Baker's yeast).